Here is a 256-residue protein sequence, read N- to C-terminus: Fibroblast growth factor 3 (256 aa).

A signal peptide spans 1–18 (MVIILLLLLLSFLDPSLE). 3 disordered regions span residues 31-54 (APCA…GGVY), 151-176 (RHHA…SSKR), and 219-256 (LRES…RADI). A compositionally biased stretch (basic residues) spans 238–256 (ERRRRRHRGSKGHNRRADI).

This sequence belongs to the heparin-binding growth factors family.

It is found in the secreted. Plays an important role in the regulation of embryonic development, cell proliferation, and cell differentiation. The chain is Fibroblast growth factor 3 (fgf3) from Danio rerio (Zebrafish).